Consider the following 225-residue polypeptide: Phosphoglycolate phosphatase (225 aa).

Asp11 acts as the Nucleophile in catalysis. The Mg(2+) site is built by Asp11 and Asp13. Lys153 is a substrate binding site. Asp176 and Asp180 together coordinate Mg(2+).

The protein belongs to the archaeal SPP-like hydrolase family. It depends on Mg(2+) as a cofactor.

The catalysed reaction is 2-phosphoglycolate + H2O = glycolate + phosphate. In terms of biological role, catalyzes the dephosphorylation of 2-phosphoglycolate. The protein is Phosphoglycolate phosphatase of Halobacterium salinarum (strain ATCC 29341 / DSM 671 / R1).